The chain runs to 403 residues: Acetate kinase (403 aa).

Residue Asn9 coordinates Mg(2+). An ATP-binding site is contributed by Lys16. Arg93 provides a ligand contact to substrate. Asp150 serves as the catalytic Proton donor/acceptor. Residues 210-214 (HLGNG), 284-286 (DFR), and 332-336 (GVGEN) each bind ATP. A Mg(2+)-binding site is contributed by Glu388.

This sequence belongs to the acetokinase family. Homodimer. Mg(2+) serves as cofactor. Mn(2+) is required as a cofactor.

Its subcellular location is the cytoplasm. The catalysed reaction is acetate + ATP = acetyl phosphate + ADP. It participates in metabolic intermediate biosynthesis; acetyl-CoA biosynthesis; acetyl-CoA from acetate: step 1/2. Functionally, catalyzes the formation of acetyl phosphate from acetate and ATP. Can also catalyze the reverse reaction. This Corynebacterium jeikeium (strain K411) protein is Acetate kinase.